A 191-amino-acid chain; its full sequence is Hypoxanthine/guanine phosphoribosyltransferase (191 aa).

It belongs to the purine/pyrimidine phosphoribosyltransferase family. Archaeal HPRT subfamily. Homodimer.

It localises to the cytoplasm. It catalyses the reaction IMP + diphosphate = hypoxanthine + 5-phospho-alpha-D-ribose 1-diphosphate. It carries out the reaction GMP + diphosphate = guanine + 5-phospho-alpha-D-ribose 1-diphosphate. It functions in the pathway purine metabolism; IMP biosynthesis via salvage pathway; IMP from hypoxanthine: step 1/1. Catalyzes a salvage reaction resulting in the formation of IMP that is energically less costly than de novo synthesis. The polypeptide is Hypoxanthine/guanine phosphoribosyltransferase (Methanocella arvoryzae (strain DSM 22066 / NBRC 105507 / MRE50)).